Reading from the N-terminus, the 1059-residue chain is Potassium transporter TRK1 (1059 aa).

Residues 1-46 (MLYRVSGFYKRHTRNFTNIDYGYYIRNFIHHIASKIYPYAKVVLPN) are Cytoplasmic-facing. The chain crosses the membrane as a helical span at residues 47–67 (FRAAHYFYILTLVILGSILVY). Residues 68-73 (PVKTCA) are Extracellular-facing. Residues 74-90 (YIDVLFFTAGASTQAGL) lie within the membrane without spanning it. Over 91-99 (NTVNVNDLS) the chain is Extracellular. A helical transmembrane segment spans residues 100–122 (LYQQIVLYLLATLATPIFIHGSL). Topologically, residues 123–625 (LFVRLYYFER…LGGIEYRAVK (503 aa)) are cytoplasmic. Disordered stretches follow at residues 180 to 276 (REAE…IDPE), 304 to 350 (IGSP…EDED), and 404 to 574 (PWTS…SIEN). The span at 186–203 (SSSSPQSSSSQTSQPVST) shows a compositional bias: low complexity. A compositionally biased stretch (basic and acidic residues) spans 236-245 (EKIHFEEPQR). Residues 335 to 344 (PATNSVGTGN) show a composition bias toward polar residues. Over residues 412 to 423 (TLSNSSKKGSLS) the composition is skewed to low complexity. Composition is skewed to acidic residues over residues 428–449 (DTED…SDIS) and 469–490 (YEED…DDGE). Positions 524–536 (RSNTLDTPQQNTS) are enriched in polar residues. Residues 540-552 (KIRKKAPKRKTPR) are compositionally biased toward basic residues. The segment covering 556 to 566 (NASFNQHSNVS) has biased composition (polar residues). Residues 626–649 (LLIKIIVVYYVGFNIIPGVMLSIW) form a helical membrane-spanning segment. The Extracellular segment spans residues 650-668 (IYCMPHYKNLMISSSISPA). The stretch at 669–685 (WWAFFTSQSSFNDLGLT) is an intramembrane region. Over 686–696 (LTSNSMMSFNQ) the chain is Extracellular. A helical transmembrane segment spans residues 697-713 (NAFVQILCSFLIVIGNT). Residues 714–757 (GFPILLRFIIWVMFKTARPLSLYKESLGFLLDHPRRCFTLLFPS) lie on the Cytoplasmic side of the membrane. The helical transmembrane segment at 758–781 (VPTWWLFFILVVLNGFDLVIFCIL) threads the bilayer. At 782–796 (DLHDDTFKGVDMGYR) the chain is on the extracellular side. Residues 797 to 813 (VLNGLFQAFCTRTVGFS) lie within the membrane without spanning it. The Extracellular portion of the chain corresponds to 814-820 (VMDLSQL). Residues 821 to 844 (HAATQVSYLIMMYISVLPIAISVR) form a helical membrane-spanning segment. The Cytoplasmic portion of the chain corresponds to 845-877 (RTNVYEEQSLGVYAKENAEGVDESAPSNYVGSH). A helical membrane pass occupies residues 878–899 (LRNQLSYDLWYICLGLFIICIA). Residues 900–912 (EGKRLKEQDLRFS) lie on the Extracellular side of the membrane. The stretch at 913–931 (IFAVLFEIVSAYGTVGMSM) is an intramembrane region. Residues 932–945 (GYPGVDCSLSGEFN) are Extracellular-facing. A helical transmembrane segment spans residues 946–968 (VISKLVIIAMMIRGRHRGLPYTI). The Cytoplasmic segment spans residues 969 to 1059 (DRAIMLPNAA…RYVVRTVSEV (91 aa)).

This sequence belongs to the TrkH potassium transport family.

The protein resides in the cell membrane. It carries out the reaction K(+)(in) = K(+)(out). The catalysed reaction is chloride(in) = chloride(out). Its activity is regulated as follows. TRK1-mediated chloride conductance is blocked by 4,4'-diisothiocyanatostilbene-2,2'-disulfonic acid. In terms of biological role, potassium transporter that mediates K(+) influx, as well as Cl(-) efflux as a secondary function. TRK1 is the major K(+) uptake transporter that regulates membrane potential and intracellular pH. The TRK1-mediated Cl(-) efflux should serve as a Cl(-) detoxification route and may play a role in sustaining C.albicans on mammalian epithelial surfaces, or in physiological saline solutions such as saliva. Its function is as follows. Mediates candidacidal activities of cysteine-free peptides, but not of defensins. The hallmark of salivary gland-secreted histatin-5 (Hst 5) killing of C.albicans is the rapid efflux of cellular ATP and other small nucleotides and ions from the cell as well as concurrent intracellular uptake of propidium iodide (PI). TRK1 is the channel for Hst 5-induced killing and histatin-5 may directly or indirectly alter TRK1 function, allowing the efflux of larger anions, including ATP, and the influx of small cationic dyes, such as PI. This is Potassium transporter TRK1 from Candida albicans (Yeast).